A 318-amino-acid polypeptide reads, in one-letter code: RNA polymerase II transcription factor B subunit 3 (318 aa).

Residues 13 to 54 (CPLCQADRYLNPNMKLLINPECYHKMCESCVDRIFTTGPAQC) form an RING-type zinc finger.

As to quaternary structure, one of the nine subunits forming the core-TFIIH basal transcription factor. Also interacts with skp1 and with the mcs2-mcs6 complex.

The protein localises to the cytoplasm. Its subcellular location is the nucleus. Functionally, acts as a component of the general transcription and DNA repair factor IIH (TFIIH or factor B), which is essential for both basal and activated transcription, and is involved in nucleotide excision repair (NER) of damaged DNA. TFIIH has CTD kinase activity and DNA-dependent ATPase activity, and is essential for polymerase II transcription. In Schizosaccharomyces pombe (strain 972 / ATCC 24843) (Fission yeast), this protein is RNA polymerase II transcription factor B subunit 3 (pmh1).